A 623-amino-acid chain; its full sequence is Membrane protein insertase YidC (623 aa).

Transmembrane regions (helical) follow at residues 8–28 (LILATGLSFLVIMVWFFLFPP), 379–399 (MGLAIIALTFLLKALVLPLAY), 449–469 (LPILIQIPIFFSLYKVIFVTI), 507–527 (TTMALIFIGALPILLGVSMWL), and 543–563 (IFAWMPWVFMFMLGHFASGLV). A compositionally biased stretch (low complexity) spans 601 to 617 (KPAAQPAGKAANDGAAP). Residues 601–623 (KPAAQPAGKAANDGAAPAKKRKP) form a disordered region.

It belongs to the OXA1/ALB3/YidC family. Type 1 subfamily. As to quaternary structure, interacts with the Sec translocase complex via SecD. Specifically interacts with transmembrane segments of nascent integral membrane proteins during membrane integration.

The protein resides in the cell inner membrane. In terms of biological role, required for the insertion and/or proper folding and/or complex formation of integral membrane proteins into the membrane. Involved in integration of membrane proteins that insert both dependently and independently of the Sec translocase complex, as well as at least some lipoproteins. Aids folding of multispanning membrane proteins. This chain is Membrane protein insertase YidC, found in Cereibacter sphaeroides (strain ATCC 17029 / ATH 2.4.9) (Rhodobacter sphaeroides).